The sequence spans 288 residues: Bifunctional protein FolD (288 aa).

NADP(+) is bound by residues 164–166 and V230; that span reads GRS.

This sequence belongs to the tetrahydrofolate dehydrogenase/cyclohydrolase family. In terms of assembly, homodimer.

The enzyme catalyses (6R)-5,10-methylene-5,6,7,8-tetrahydrofolate + NADP(+) = (6R)-5,10-methenyltetrahydrofolate + NADPH. It carries out the reaction (6R)-5,10-methenyltetrahydrofolate + H2O = (6R)-10-formyltetrahydrofolate + H(+). It participates in one-carbon metabolism; tetrahydrofolate interconversion. In terms of biological role, catalyzes the oxidation of 5,10-methylenetetrahydrofolate to 5,10-methenyltetrahydrofolate and then the hydrolysis of 5,10-methenyltetrahydrofolate to 10-formyltetrahydrofolate. The polypeptide is Bifunctional protein FolD (Thermomicrobium roseum (strain ATCC 27502 / DSM 5159 / P-2)).